The following is a 283-amino-acid chain: Homeobox protein Hox-C12b (283 aa).

The segment at residues 215-274 is a DNA-binding region (homeobox); the sequence is TRKKRKPYSKLQLNELEGEFILNEFITRQRRRELSDRLNLTDQQVKIWFQNRRMKKKRLL.

Belongs to the Abd-B homeobox family.

It localises to the nucleus. Its function is as follows. Sequence-specific transcription factor which is part of a developmental regulatory system that provides cells with specific positional identities on the anterior-posterior axis. In Danio rerio (Zebrafish), this protein is Homeobox protein Hox-C12b (hoxc12b).